The following is a 316-amino-acid chain: D-alanine--D-alanine ligase (316 aa).

One can recognise an ATP-grasp domain in the interval 112-310; sequence KTALKAHGLP…FGKLCRWLVE (199 aa). Residue 139–189 participates in ATP binding; sequence MATPYVVKPNNEGSSVGVYLVNEAANGPPHLSDDMPDEVMVETYAPGRELT. Residues Asp-261, Glu-277, and Asn-279 each coordinate Mg(2+).

Belongs to the D-alanine--D-alanine ligase family. It depends on Mg(2+) as a cofactor. Requires Mn(2+) as cofactor.

It is found in the cytoplasm. It carries out the reaction 2 D-alanine + ATP = D-alanyl-D-alanine + ADP + phosphate + H(+). It participates in cell wall biogenesis; peptidoglycan biosynthesis. In terms of biological role, cell wall formation. The chain is D-alanine--D-alanine ligase from Jannaschia sp. (strain CCS1).